The sequence spans 355 residues: Putative arylamide transporter (355 aa).

6 helical membrane-spanning segments follow: residues Thr-22–His-42, Val-44–Thr-64, Arg-71–Ala-91, Leu-92–Val-112, Val-119–Phe-139, and Leu-150–Pro-170.

The protein resides in the cell membrane. Its function is as follows. May be involved in the import of arylamide compounds. The sequence is that of Putative arylamide transporter from Mycobacterium bovis (strain ATCC BAA-935 / AF2122/97).